Here is a 189-residue protein sequence, read N- to C-terminus: Isopentenyl-diphosphate Delta-isomerase (189 aa).

Residues H27 and H34 each contribute to the Mn(2+) site. The Nudix hydrolase domain maps to P32–D171. C69 is a catalytic residue. H71 serves as a coordination point for Mn(2+). Residue E89 coordinates Mg(2+). E119 and E121 together coordinate Mn(2+). Residue E121 is part of the active site.

The protein belongs to the IPP isomerase type 1 family. The cofactor is Mg(2+). Mn(2+) serves as cofactor.

It is found in the cytoplasm. It catalyses the reaction isopentenyl diphosphate = dimethylallyl diphosphate. It functions in the pathway isoprenoid biosynthesis; dimethylallyl diphosphate biosynthesis; dimethylallyl diphosphate from isopentenyl diphosphate: step 1/1. Catalyzes the 1,3-allylic rearrangement of the homoallylic substrate isopentenyl (IPP) to its highly electrophilic allylic isomer, dimethylallyl diphosphate (DMAPP). The sequence is that of Isopentenyl-diphosphate Delta-isomerase from Corynebacterium glutamicum (strain R).